Here is a 280-residue protein sequence, read N- to C-terminus: Dihydropteroate synthase (280 aa).

A Pterin-binding domain is found at 1 to 265; sequence MSPAPVQVMG…DVRASVDAIK (265 aa). Residue Asn13 participates in Mg(2+) binding. (7,8-dihydropterin-6-yl)methyl diphosphate-binding positions include Asp86, Asn105, Asp177, Lys213, and 253 to 255; that span reads RVH.

This sequence belongs to the DHPS family. In terms of assembly, homodimer. Mg(2+) serves as cofactor.

It catalyses the reaction (7,8-dihydropterin-6-yl)methyl diphosphate + 4-aminobenzoate = 7,8-dihydropteroate + diphosphate. It participates in cofactor biosynthesis; tetrahydrofolate biosynthesis; 7,8-dihydrofolate from 2-amino-4-hydroxy-6-hydroxymethyl-7,8-dihydropteridine diphosphate and 4-aminobenzoate: step 1/2. Catalyzes the condensation of para-aminobenzoate (pABA) with 6-hydroxymethyl-7,8-dihydropterin diphosphate (DHPt-PP) to form 7,8-dihydropteroate (H2Pte), the immediate precursor of folate derivatives. The protein is Dihydropteroate synthase (folP1) of Mycobacterium bovis (strain ATCC BAA-935 / AF2122/97).